Reading from the N-terminus, the 485-residue chain is Cholesterol 16,22-dihydroxylase CYP90G4 (485 aa).

Residues 4-24 traverse the membrane as a helical segment; that stretch reads VVILFFLFPTLLVLVVAVLGL. Cysteine 432 contributes to the heme binding site.

The protein belongs to the cytochrome P450 family. Mainly expressed in leaves and, at low levels, in roots and stems.

The protein localises to the membrane. It catalyses the reaction cholesterol + 2 reduced [NADPH--hemoprotein reductase] + 2 O2 = (16S,22S)-dihydroxycholesterol + 2 oxidized [NADPH--hemoprotein reductase] + 2 H2O + 2 H(+). It functions in the pathway steroid metabolism; cholesterol metabolism. Involved in the biosynthesis of spiroketal steroid and saponin natural products from cholesterol such as diosgenin and analogs (e.g. furostanol and spirostanol), plant defense compounds used as main precursors for the industrial production of steroid hormones. During the 5,6-spiroketalization of cholesterol, catalyzes the hydroxylation of cholesterol to form 16S,22S-dihydroxycholesterol and, possibly, the subsequent conversion of 16S,22S-dihydroxycholesterol into 16-oxo-22-hydroxy-cholesterol and 16-hydroxy-22-oxo-cholesterol. 16-hydroxy-22-oxo-cholesterol submit a spontaneous reaction leading to the production of furostanol-type steroid diastereomers, precursors of diosgenin. This is Cholesterol 16,22-dihydroxylase CYP90G4 from Paris polyphylla (Daiswa polyphylla).